A 212-amino-acid polypeptide reads, in one-letter code: Small ribosomal subunit protein eS1 (212 aa).

The protein belongs to the eukaryotic ribosomal protein eS1 family.

This chain is Small ribosomal subunit protein eS1, found in Ignicoccus hospitalis (strain KIN4/I / DSM 18386 / JCM 14125).